Consider the following 1203-residue polypeptide: DNA-directed RNA polymerase subunit beta' (1203 aa).

Zn(2+)-binding residues include Cys60, Cys62, Cys75, and Cys78. 3 residues coordinate Mg(2+): Asp449, Asp451, and Asp453. Zn(2+) contacts are provided by Cys818, Cys892, Cys899, and Cys902.

It belongs to the RNA polymerase beta' chain family. As to quaternary structure, the RNAP catalytic core consists of 2 alpha, 1 beta, 1 beta' and 1 omega subunit. When a sigma factor is associated with the core the holoenzyme is formed, which can initiate transcription. It depends on Mg(2+) as a cofactor. The cofactor is Zn(2+).

The enzyme catalyses RNA(n) + a ribonucleoside 5'-triphosphate = RNA(n+1) + diphosphate. Its function is as follows. DNA-dependent RNA polymerase catalyzes the transcription of DNA into RNA using the four ribonucleoside triphosphates as substrates. The polypeptide is DNA-directed RNA polymerase subunit beta' (Bacillus cereus (strain ATCC 14579 / DSM 31 / CCUG 7414 / JCM 2152 / NBRC 15305 / NCIMB 9373 / NCTC 2599 / NRRL B-3711)).